We begin with the raw amino-acid sequence, 280 residues long: uncharacterized protein (280 aa).

A run of 7 helical transmembrane segments spans residues 6–26, 38–58, 79–99, 105–125, 144–164, 171–191, and 231–251; these read YLVI…TPLV, VLAI…YLFP, IFLL…VFLK, GVLA…ELIF, NQIY…IILW, ISFF…ALMV, and LVFI…TLFA.

It localises to the cell membrane. This is an uncharacterized protein from Mycoplasma genitalium (strain ATCC 33530 / DSM 19775 / NCTC 10195 / G37) (Mycoplasmoides genitalium).